We begin with the raw amino-acid sequence, 306 residues long: tRNA pseudouridine synthase B (306 aa).

Asp48 serves as the catalytic Nucleophile.

The protein belongs to the pseudouridine synthase TruB family. Type 1 subfamily.

The catalysed reaction is uridine(55) in tRNA = pseudouridine(55) in tRNA. Its function is as follows. Responsible for synthesis of pseudouridine from uracil-55 in the psi GC loop of transfer RNAs. The polypeptide is tRNA pseudouridine synthase B (Haemophilus influenzae (strain 86-028NP)).